Here is a 209-residue protein sequence, read N- to C-terminus: Nascent polypeptide-associated complex subunit alpha-like protein 5 (209 aa).

The segment at 23–71 (EKEDDVVVEDVKDGEEEDDDEDDEDVEVEGEGGNENAKQSRSEKKSRKA) is disordered. A compositionally biased stretch (acidic residues) spans 25–54 (EDDVVVEDVKDGEEEDDDEDDEDVEVEGEG). Residues 62–127 (SRSEKKSRKA…AKVDDLSSQL (66 aa)) enclose the NAC-A/B domain. Residues 170-207 (VEARDIDLVMTQAGVSKAKAVSALKANDGDIVSAIMEL) enclose the UBA domain.

Belongs to the NAC-alpha family.

May promote appropriate targeting of ribosome-nascent polypeptide complexes. This Arabidopsis thaliana (Mouse-ear cress) protein is Nascent polypeptide-associated complex subunit alpha-like protein 5.